Consider the following 149-residue polypeptide: 3-hydroxyacyl-[acyl-carrier-protein] dehydratase FabZ (149 aa).

Residue His-53 is part of the active site.

The protein belongs to the thioester dehydratase family. FabZ subfamily.

The protein resides in the cytoplasm. The enzyme catalyses a (3R)-hydroxyacyl-[ACP] = a (2E)-enoyl-[ACP] + H2O. Functionally, involved in unsaturated fatty acids biosynthesis. Catalyzes the dehydration of short chain beta-hydroxyacyl-ACPs and long chain saturated and unsaturated beta-hydroxyacyl-ACPs. The polypeptide is 3-hydroxyacyl-[acyl-carrier-protein] dehydratase FabZ (Polynucleobacter asymbioticus (strain DSM 18221 / CIP 109841 / QLW-P1DMWA-1) (Polynucleobacter necessarius subsp. asymbioticus)).